Reading from the N-terminus, the 334-residue chain is DNA-directed RNA polymerase subunit alpha (334 aa).

The alpha N-terminal domain (alpha-NTD) stretch occupies residues 1–234; sequence MQRSVHELLT…QQLAVFVDFD (234 aa). The alpha C-terminal domain (alpha-CTD) stretch occupies residues 248-334; sequence IDPILLRPVD…LRGDDRVLGG (87 aa).

This sequence belongs to the RNA polymerase alpha chain family. Homodimer. The RNAP catalytic core consists of 2 alpha, 1 beta, 1 beta' and 1 omega subunit. When a sigma factor is associated with the core the holoenzyme is formed, which can initiate transcription.

It carries out the reaction RNA(n) + a ribonucleoside 5'-triphosphate = RNA(n+1) + diphosphate. In terms of biological role, DNA-dependent RNA polymerase catalyzes the transcription of DNA into RNA using the four ribonucleoside triphosphates as substrates. The protein is DNA-directed RNA polymerase subunit alpha of Marinobacter nauticus (strain ATCC 700491 / DSM 11845 / VT8) (Marinobacter aquaeolei).